The following is a 380-amino-acid chain: Septin homolog spn4 (380 aa).

Residues 25–298 (NGVAFTLMLC…EQYRQEQMKV (274 aa)) enclose the Septin-type G domain. The tract at residues 35 to 42 (GESGLGKT) is G1 motif. Residues 35 to 42 (GESGLGKT), Thr-70, Gly-96, 175 to 183 (KADMYTRRD), Gly-231, and Arg-247 contribute to the GTP site. The interval 93–96 (DTPG) is G3 motif. Positions 174-177 (AKAD) are G4 motif.

Belongs to the TRAFAC class TrmE-Era-EngA-EngB-Septin-like GTPase superfamily. Septin GTPase family. Component of the septin complex composed of two copies of each spn1, spn2, spn3 and spn4.

It localises to the cytoplasm. It is found in the cell cortex. In terms of biological role, plays a role in the cell cycle. Involved in a late stage of septum formation leading to the separation of the daughter cells. This chain is Septin homolog spn4 (spn4), found in Schizosaccharomyces pombe (strain 972 / ATCC 24843) (Fission yeast).